A 274-amino-acid polypeptide reads, in one-letter code: Undecaprenyl-diphosphatase 1 (274 aa).

8 helical membrane passes run 7–27 (LEIF…WLPV), 48–68 (FIST…LVIF), 88–108 (VRLW…GILF), 115–135 (LFFN…IMIG), 151–171 (VTYK…IPGT), 189–209 (YVAA…ASAL), 221–241 (FEWL…IVVI), and 253–273 (FKVF…YFFL).

It belongs to the UppP family.

The protein resides in the cell membrane. It catalyses the reaction di-trans,octa-cis-undecaprenyl diphosphate + H2O = di-trans,octa-cis-undecaprenyl phosphate + phosphate + H(+). In terms of biological role, catalyzes the dephosphorylation of undecaprenyl diphosphate (UPP). Confers resistance to bacitracin. The polypeptide is Undecaprenyl-diphosphatase 1 (Clostridioides difficile (strain 630) (Peptoclostridium difficile)).